Reading from the N-terminus, the 357-residue chain is UDP-N-acetylglucosamine--N-acetylmuramyl-(pentapeptide) pyrophosphoryl-undecaprenol N-acetylglucosamine transferase (357 aa).

Residues 13–15, Asn-125, Arg-161, Ser-189, Ile-243, and Gln-288 each bind UDP-N-acetyl-alpha-D-glucosamine; that span reads TGG.

This sequence belongs to the glycosyltransferase 28 family. MurG subfamily.

The protein resides in the cell inner membrane. The enzyme catalyses di-trans,octa-cis-undecaprenyl diphospho-N-acetyl-alpha-D-muramoyl-L-alanyl-D-glutamyl-meso-2,6-diaminopimeloyl-D-alanyl-D-alanine + UDP-N-acetyl-alpha-D-glucosamine = di-trans,octa-cis-undecaprenyl diphospho-[N-acetyl-alpha-D-glucosaminyl-(1-&gt;4)]-N-acetyl-alpha-D-muramoyl-L-alanyl-D-glutamyl-meso-2,6-diaminopimeloyl-D-alanyl-D-alanine + UDP + H(+). The protein operates within cell wall biogenesis; peptidoglycan biosynthesis. Its function is as follows. Cell wall formation. Catalyzes the transfer of a GlcNAc subunit on undecaprenyl-pyrophosphoryl-MurNAc-pentapeptide (lipid intermediate I) to form undecaprenyl-pyrophosphoryl-MurNAc-(pentapeptide)GlcNAc (lipid intermediate II). In Bordetella parapertussis (strain 12822 / ATCC BAA-587 / NCTC 13253), this protein is UDP-N-acetylglucosamine--N-acetylmuramyl-(pentapeptide) pyrophosphoryl-undecaprenol N-acetylglucosamine transferase.